The following is a 151-amino-acid chain: NADPH-dependent 7-cyano-7-deazaguanine reductase (151 aa).

C49 (thioimide intermediate) is an active-site residue. D56 (proton donor) is an active-site residue. Residues 71 to 73 (IES) and 90 to 91 (HE) contribute to the substrate site.

Belongs to the GTP cyclohydrolase I family. QueF type 1 subfamily.

The protein resides in the cytoplasm. It catalyses the reaction 7-aminomethyl-7-carbaguanine + 2 NADP(+) = 7-cyano-7-deazaguanine + 2 NADPH + 3 H(+). Its pathway is tRNA modification; tRNA-queuosine biosynthesis. Its function is as follows. Catalyzes the NADPH-dependent reduction of 7-cyano-7-deazaguanine (preQ0) to 7-aminomethyl-7-deazaguanine (preQ1). The polypeptide is NADPH-dependent 7-cyano-7-deazaguanine reductase (Caulobacter vibrioides (strain ATCC 19089 / CIP 103742 / CB 15) (Caulobacter crescentus)).